Reading from the N-terminus, the 83-residue chain is Small ribosomal subunit protein eS21 (83 aa).

This sequence belongs to the eukaryotic ribosomal protein eS21 family. In terms of assembly, component of the 40S small ribosomal subunit. Interacts with sta.

It is found in the cytoplasm. It localises to the cytosol. The protein resides in the rough endoplasmic reticulum. May be an associated component of the ribosome rather than a core structural subunit. May act as a translation initiation factor. Has a role in regulation of cell proliferation in the hematopoietic organs and the imaginal disks of larva. The protein is Small ribosomal subunit protein eS21 (RpS21) of Drosophila ananassae (Fruit fly).